The chain runs to 421 residues: UDP-N-acetylglucosamine 1-carboxyvinyltransferase (421 aa).

Residue 22-23 (KN) participates in phosphoenolpyruvate binding. Residue arginine 93 participates in UDP-N-acetyl-alpha-D-glucosamine binding. Cysteine 117 serves as the catalytic Proton donor. Cysteine 117 bears the 2-(S-cysteinyl)pyruvic acid O-phosphothioketal mark. Residues 122–126 (RPVDL), aspartate 308, and isoleucine 330 each bind UDP-N-acetyl-alpha-D-glucosamine.

The protein belongs to the EPSP synthase family. MurA subfamily.

It is found in the cytoplasm. It carries out the reaction phosphoenolpyruvate + UDP-N-acetyl-alpha-D-glucosamine = UDP-N-acetyl-3-O-(1-carboxyvinyl)-alpha-D-glucosamine + phosphate. Its pathway is cell wall biogenesis; peptidoglycan biosynthesis. Functionally, cell wall formation. Adds enolpyruvyl to UDP-N-acetylglucosamine. This Pseudomonas fluorescens (strain Pf0-1) protein is UDP-N-acetylglucosamine 1-carboxyvinyltransferase.